Consider the following 507-residue polypeptide: UDP-N-acetylglucosamine 1-carboxyvinyltransferase 1 (507 aa).

41–42 (KN) serves as a coordination point for phosphoenolpyruvate. Arginine 112 is a UDP-N-acetyl-alpha-D-glucosamine binding site. The active-site Proton donor is the cysteine 136. 2-(S-cysteinyl)pyruvic acid O-phosphothioketal is present on cysteine 136. Residues 141–145 (RPIDL), aspartate 328, and leucine 350 each bind UDP-N-acetyl-alpha-D-glucosamine.

Belongs to the EPSP synthase family. MurA subfamily.

The protein resides in the cytoplasm. The enzyme catalyses phosphoenolpyruvate + UDP-N-acetyl-alpha-D-glucosamine = UDP-N-acetyl-3-O-(1-carboxyvinyl)-alpha-D-glucosamine + phosphate. Its pathway is cell wall biogenesis; peptidoglycan biosynthesis. Its function is as follows. Cell wall formation. Adds enolpyruvyl to UDP-N-acetylglucosamine. This chain is UDP-N-acetylglucosamine 1-carboxyvinyltransferase 1, found in Legionella pneumophila (strain Lens).